A 241-amino-acid chain; its full sequence is 4-hydroxy-tetrahydrodipicolinate reductase (241 aa).

Residues 80 to 82 (ATT) and 104 to 107 (SANM) contribute to the NAD(+) site. The active-site Proton donor/acceptor is the His136. His137 serves as a coordination point for (S)-2,3,4,5-tetrahydrodipicolinate. Lys140 acts as the Proton donor in catalysis. 146–147 (GT) is a (S)-2,3,4,5-tetrahydrodipicolinate binding site.

This sequence belongs to the DapB family.

It localises to the cytoplasm. The catalysed reaction is (S)-2,3,4,5-tetrahydrodipicolinate + NAD(+) + H2O = (2S,4S)-4-hydroxy-2,3,4,5-tetrahydrodipicolinate + NADH + H(+). The enzyme catalyses (S)-2,3,4,5-tetrahydrodipicolinate + NADP(+) + H2O = (2S,4S)-4-hydroxy-2,3,4,5-tetrahydrodipicolinate + NADPH + H(+). The protein operates within amino-acid biosynthesis; L-lysine biosynthesis via DAP pathway; (S)-tetrahydrodipicolinate from L-aspartate: step 4/4. In terms of biological role, catalyzes the conversion of 4-hydroxy-tetrahydrodipicolinate (HTPA) to tetrahydrodipicolinate. The polypeptide is 4-hydroxy-tetrahydrodipicolinate reductase (Staphylococcus haemolyticus (strain JCSC1435)).